The following is a 1048-amino-acid chain: Protein argonaute 7 (1048 aa).

Over residues 1-14 the composition is skewed to basic and acidic residues; the sequence is MEGEREGVVAKNED. Disordered stretches follow at residues 1–50 and 121–141; these read MEGE…GSSG and KAADAAPRGSMWKHRPSKKPP. Residues 16-37 show a composition bias toward gly residues; that stretch reads AGGGGGGLGTGGNGGGGGGGSA. The span at 131 to 141 shows a compositional bias: basic residues; that stretch reads MWKHRPSKKPP. Residues 422–530 form the PAZ domain; it reads KRCDFLKDLP…VPMELCVVCE (109 aa). In terms of domain architecture, Piwi spans 709 to 1017; sequence LLICVMERRH…AAYRGRLYLE (309 aa).

Belongs to the argonaute family. Ago subfamily. Expressed in the reproductive shoot apex.

Functionally, involved in the RNA silencing pathway. May bind to short RNAs such as microRNAs (miRNAs) or short interfering RNAs (siRNAs), and represses the translation of mRNAs which are complementary to them. Regulates shoot apical meristem (SAM) initiation and maintenance and leaf polarization through the trans-acting siRNAS (ta-siRNAs) pathway which probably modulates the expression of the ARF2, ARF3, ARF4, ARF14 and ARF15 genes. This chain is Protein argonaute 7 (AGO7), found in Oryza sativa subsp. japonica (Rice).